The chain runs to 342 residues: tRNA N6-adenosine threonylcarbamoyltransferase (342 aa).

Fe cation contacts are provided by His-119 and His-123. Substrate is bound by residues 142-146, Asp-175, Gly-188, and Asn-282; that span reads VVSGG. A Fe cation-binding site is contributed by Asp-310.

This sequence belongs to the KAE1 / TsaD family. The cofactor is Fe(2+).

It is found in the cytoplasm. The catalysed reaction is L-threonylcarbamoyladenylate + adenosine(37) in tRNA = N(6)-L-threonylcarbamoyladenosine(37) in tRNA + AMP + H(+). Required for the formation of a threonylcarbamoyl group on adenosine at position 37 (t(6)A37) in tRNAs that read codons beginning with adenine. Is involved in the transfer of the threonylcarbamoyl moiety of threonylcarbamoyl-AMP (TC-AMP) to the N6 group of A37, together with TsaE and TsaB. TsaD likely plays a direct catalytic role in this reaction. This chain is tRNA N6-adenosine threonylcarbamoyltransferase, found in Moorella thermoacetica (strain ATCC 39073 / JCM 9320).